Reading from the N-terminus, the 440-residue chain is Protein naked cuticle homolog 1 (440 aa).

Glycine 2 carries N-myristoyl glycine lipidation. Residues 129–164 form the EF-hand domain; it reads EEDNRQEWTFTLYDFDNNGKVTREDITSLLHTIYEV. Aspartate 142, aspartate 144, asparagine 146, lysine 148, and aspartate 153 together coordinate Ca(2+). Over residues 192-204 the composition is skewed to polar residues; that stretch reads RWKNCTQTNTDTP. 3 disordered regions span residues 192–221, 272–379, and 421–440; these read RWKN…KTSE, AAPA…QRPK, and RHEH…FYQS. Residues 211–221 show a composition bias toward basic and acidic residues; sequence EKCIEDSKTSE. Positions 272-293 are enriched in low complexity; the sequence is AAPATEPAKPTHATRSSNQSRS. Over residues 324–336 the composition is skewed to basic residues; sequence RHTHALRSPKTHR. The segment covering 352 to 362 has biased composition (pro residues); it reads APPPPSVPNQT. The span at 422 to 440 shows a compositional bias: basic residues; the sequence is HEHHHHHEHHHHYHHFYQS.

The protein belongs to the NKD family.

It localises to the cell membrane. Its subcellular location is the cytoplasm. In terms of biological role, cell autonomous antagonist of the canonical Wnt signaling pathway. May activate a second Wnt signaling pathway that controls planar cell polarity. The sequence is that of Protein naked cuticle homolog 1 (nkd1) from Danio rerio (Zebrafish).